Reading from the N-terminus, the 204-residue chain is FMN-dependent NADH:quinone oxidoreductase (204 aa).

FMN-binding positions include serine 10, 15–17, and 139–142; these read SLS and TSGG.

Belongs to the azoreductase type 1 family. In terms of assembly, homodimer. FMN is required as a cofactor.

It catalyses the reaction 2 a quinone + NADH + H(+) = 2 a 1,4-benzosemiquinone + NAD(+). The enzyme catalyses N,N-dimethyl-1,4-phenylenediamine + anthranilate + 2 NAD(+) = 2-(4-dimethylaminophenyl)diazenylbenzoate + 2 NADH + 2 H(+). In terms of biological role, quinone reductase that provides resistance to thiol-specific stress caused by electrophilic quinones. Functionally, also exhibits azoreductase activity. Catalyzes the reductive cleavage of the azo bond in aromatic azo compounds to the corresponding amines. This is FMN-dependent NADH:quinone oxidoreductase from Rhizobium leguminosarum bv. trifolii (strain WSM2304).